The following is a 1489-amino-acid chain: DNA-directed RNA polymerase subunit beta (1489 aa).

Belongs to the RNA polymerase beta chain family. As to quaternary structure, the RNAP catalytic core consists of 2 alpha, 1 beta, 1 beta' and 1 omega subunit. When a sigma factor is associated with the core the holoenzyme is formed, which can initiate transcription.

The enzyme catalyses RNA(n) + a ribonucleoside 5'-triphosphate = RNA(n+1) + diphosphate. DNA-dependent RNA polymerase catalyzes the transcription of DNA into RNA using the four ribonucleoside triphosphates as substrates. The chain is DNA-directed RNA polymerase subunit beta from Koribacter versatilis (strain Ellin345).